We begin with the raw amino-acid sequence, 593 residues long: ETS-related transcription factor Elf-2 (593 aa).

The segment at 1-34 (MASAVVDSGGSALELPSDGGENQEGGDTGPDCPA) is disordered. Ser-107 carries the post-translational modification Phosphoserine. Residues 146-199 (VEVSTEESEPMDASPIPTSPDSHEPMKKKKVGRKPKTQQSPVSNGSPELGIKKK) form a disordered region. The span at 171–181 (MKKKKVGRKPK) shows a compositional bias: basic residues. Thr-182 carries the post-translational modification Phosphothreonine. A compositionally biased stretch (polar residues) spans 182–191 (TQQSPVSNGS). Residues Ser-185 and Ser-191 each carry the phosphoserine modification. A DNA-binding region (ETS) is located at residues 208–290 (TYLWEFLLDL…EGQRLVYQFK (83 aa)). The tract at residues 362-383 (TSPTHDGSSRSPTTTAPVSAAA) is disordered. Phosphoserine is present on residues Ser-363 and Ser-372. The span at 370 to 383 (SRSPTTTAPVSAAA) shows a compositional bias: low complexity. The residue at position 376 (Thr-376) is a Phosphothreonine. Ser-432 carries the post-translational modification Phosphoserine. Arg-496 bears the Omega-N-methylarginine mark. Thr-523 is modified (phosphothreonine). Residue Lys-538 forms a Glycyl lysine isopeptide (Lys-Gly) (interchain with G-Cter in SUMO2) linkage.

This sequence belongs to the ETS family. In terms of assembly, interacts with LIM domains of LMO2. Interacts via its N-terminal region with RUNX1. Expressed in all tissues examined. Highest levels in thymocytes and bone marrow.

Its subcellular location is the nucleus. Probably transcriptionally activates the LYN and BLK promoters and acts synergistically with RUNX1 to transactivate the BLK promoter. The chain is ETS-related transcription factor Elf-2 from Mus musculus (Mouse).